The sequence spans 433 residues: MSDIIYIEGREILDSRGNPTVEVEVQLSDFSYGRACVPSGASTGEYEALEMRDGDKSRYMGKGVLKAVDQVNTVIAEELDGADALDQAEIDNMLINLDGTENKSKLGANAMLGVSMAVARAAADSLGLPLYRYLGGVHAMQMPVPMANIINGGRHSDNKIDFQEYMIMPVGAPSIREGIRMTAEVFHALKDILKKEGHVTAVGDEGGFAPNIENVQALDYIMKAIEKAGYKPGKDVVIALDCASSELFDAGDRKGYKFWKSEPSKILNADEMVDLFKDWISKYPIVSIEDPLDQNDWEGYAKMTKELGNQIQIVGDDFFVTNTKRLARGIEEGACNSILIKLNQIGTVTETIDAVRMAQKAGYTAVISHRSGETEDAFIADLAVALETGQIKTGSMSRSDRIAKYNQLMRIEDELGYNARYAGMATFANLIKK.

Glutamine 163 lines the (2R)-2-phosphoglycerate pocket. The Proton donor role is filled by glutamate 205. Residues aspartate 241, glutamate 289, and aspartate 316 each coordinate Mg(2+). The (2R)-2-phosphoglycerate site is built by lysine 341, arginine 370, serine 371, and lysine 392. The active-site Proton acceptor is the lysine 341.

It belongs to the enolase family. Mg(2+) is required as a cofactor.

It localises to the cytoplasm. The protein localises to the secreted. Its subcellular location is the cell surface. It catalyses the reaction (2R)-2-phosphoglycerate = phosphoenolpyruvate + H2O. It functions in the pathway carbohydrate degradation; glycolysis; pyruvate from D-glyceraldehyde 3-phosphate: step 4/5. Catalyzes the reversible conversion of 2-phosphoglycerate (2-PG) into phosphoenolpyruvate (PEP). It is essential for the degradation of carbohydrates via glycolysis. The chain is Enolase from Treponema denticola (strain ATCC 35405 / DSM 14222 / CIP 103919 / JCM 8153 / KCTC 15104).